Here is an 896-residue protein sequence, read N- to C-terminus: Protein translocase subunit SecA (896 aa).

ATP contacts are provided by residues Gln-87, 105-109 (GEGKT), and Asp-512. Residues 858-886 (RAGGEAEAAKPVVRDEKKVGRNDPCPCGS) form a disordered region. The span at 869–878 (VVRDEKKVGR) shows a compositional bias: basic and acidic residues. Zn(2+)-binding residues include Cys-882, Cys-884, Cys-893, and Cys-894.

It belongs to the SecA family. In terms of assembly, monomer and homodimer. Part of the essential Sec protein translocation apparatus which comprises SecA, SecYEG and auxiliary proteins SecDF-YajC and YidC. Zn(2+) is required as a cofactor.

It is found in the cell inner membrane. It localises to the cytoplasm. The enzyme catalyses ATP + H2O + cellular proteinSide 1 = ADP + phosphate + cellular proteinSide 2.. Functionally, part of the Sec protein translocase complex. Interacts with the SecYEG preprotein conducting channel. Has a central role in coupling the hydrolysis of ATP to the transfer of proteins into and across the cell membrane, serving as an ATP-driven molecular motor driving the stepwise translocation of polypeptide chains across the membrane. The sequence is that of Protein translocase subunit SecA from Syntrophotalea carbinolica (strain DSM 2380 / NBRC 103641 / GraBd1) (Pelobacter carbinolicus).